A 674-amino-acid polypeptide reads, in one-letter code: Probable copper-transporting P-type ATPase B (674 aa).

Residues 1–22 (MNHSNQMHHDNHASHDHHSGHA) form a disordered region. Basic and acidic residues predominate over residues 7 to 19 (MHHDNHASHDHHS). 6 helical membrane-spanning segments follow: residues 32–52 (FFVS…MGVN), 57–77 (FTFP…FFYG), 95–115 (GMMT…LYAF), 127–147 (TMDF…GHWI), 284–304 (GYLF…WMLI), and 315–335 (LVTV…PLVT). The 4-aspartylphosphate intermediate role is filled by D367. Mg(2+) is bound by residues D565 and D569. The next 2 membrane-spanning stretches (helical) occupy residues 623–645 (LWWG…AFIG) and 649–671 (SPAI…AFTL).

It belongs to the cation transport ATPase (P-type) (TC 3.A.3) family. Type IB subfamily.

The protein localises to the cell membrane. The catalysed reaction is Cu(+)(in) + ATP + H2O = Cu(+)(out) + ADP + phosphate + H(+). In terms of biological role, involved in copper transport. In Staphylococcus aureus (strain USA300 / TCH1516), this protein is Probable copper-transporting P-type ATPase B (copB).